Here is a 47-residue protein sequence, read N- to C-terminus: Delta-ctenitoxin-Asp2e (47 aa).

5 cysteine pairs are disulfide-bonded: cysteine 3–cysteine 17, cysteine 10–cysteine 23, cysteine 14–cysteine 46, cysteine 16–cysteine 31, and cysteine 25–cysteine 29.

Expressed by the venom gland.

The protein localises to the secreted. Functionally, inhibits the inactivation of voltage-gated sodium channels (Nav). The protein is Delta-ctenitoxin-Asp2e of Ancylometes sp. (South American fishing spider).